The following is a 185-amino-acid chain: Elongation factor P (185 aa).

The protein belongs to the elongation factor P family.

It is found in the cytoplasm. The protein operates within protein biosynthesis; polypeptide chain elongation. Its function is as follows. Involved in peptide bond synthesis. Stimulates efficient translation and peptide-bond synthesis on native or reconstituted 70S ribosomes in vitro. Probably functions indirectly by altering the affinity of the ribosome for aminoacyl-tRNA, thus increasing their reactivity as acceptors for peptidyl transferase. This Thermosipho africanus (strain TCF52B) protein is Elongation factor P.